We begin with the raw amino-acid sequence, 344 residues long: Phenylalanine--tRNA ligase alpha subunit (344 aa).

Glu-255 contacts Mg(2+).

Belongs to the class-II aminoacyl-tRNA synthetase family. Phe-tRNA synthetase alpha subunit type 1 subfamily. Tetramer of two alpha and two beta subunits. It depends on Mg(2+) as a cofactor.

Its subcellular location is the cytoplasm. The catalysed reaction is tRNA(Phe) + L-phenylalanine + ATP = L-phenylalanyl-tRNA(Phe) + AMP + diphosphate + H(+). The chain is Phenylalanine--tRNA ligase alpha subunit from Phocaeicola vulgatus (strain ATCC 8482 / DSM 1447 / JCM 5826 / CCUG 4940 / NBRC 14291 / NCTC 11154) (Bacteroides vulgatus).